Consider the following 192-residue polypeptide: Imidazole glycerol phosphate synthase subunit HisH (192 aa).

In terms of domain architecture, Glutamine amidotransferase type-1 spans 1–192 (MIVIVDYGLG…QAIQGGFIND (192 aa)). The active-site Nucleophile is the C77. Active-site residues include H169 and E171.

As to quaternary structure, heterodimer of HisH and HisF.

The protein localises to the cytoplasm. It carries out the reaction 5-[(5-phospho-1-deoxy-D-ribulos-1-ylimino)methylamino]-1-(5-phospho-beta-D-ribosyl)imidazole-4-carboxamide + L-glutamine = D-erythro-1-(imidazol-4-yl)glycerol 3-phosphate + 5-amino-1-(5-phospho-beta-D-ribosyl)imidazole-4-carboxamide + L-glutamate + H(+). The enzyme catalyses L-glutamine + H2O = L-glutamate + NH4(+). It participates in amino-acid biosynthesis; L-histidine biosynthesis; L-histidine from 5-phospho-alpha-D-ribose 1-diphosphate: step 5/9. Its function is as follows. IGPS catalyzes the conversion of PRFAR and glutamine to IGP, AICAR and glutamate. The HisH subunit catalyzes the hydrolysis of glutamine to glutamate and ammonia as part of the synthesis of IGP and AICAR. The resulting ammonia molecule is channeled to the active site of HisF. The chain is Imidazole glycerol phosphate synthase subunit HisH from Staphylococcus aureus (strain bovine RF122 / ET3-1).